A 707-amino-acid polypeptide reads, in one-letter code: Alpha-hemolysin translocation ATP-binding protein HlyB (707 aa).

Residues 3–125 enclose the Peptidase C39 domain; that stretch reads SCHKIDYGLY…ALYQGHIILI (123 aa). The active site involves H83. In terms of domain architecture, ABC transmembrane type-1 spans 154–436; the sequence is FIETLVVSVF…LAQIWQDFQQ (283 aa). 5 consecutive transmembrane segments (helical) span residues 158 to 178, 191 to 211, 269 to 289, 295 to 315, and 388 to 408; these read LVVS…FQVV, LNVI…LSGL, ALTS…MWYY, LVIL…SPIL, and VMII…LSIG. In terms of domain architecture, ABC transporter spans 468–703; sequence ITFRNIRFRY…PESLYSYLYQ (236 aa). Residue 502–509 participates in ATP binding; that stretch reads GRSGSGKS.

This sequence belongs to the ABC transporter superfamily. Protein-1 exporter (TC 3.A.1.109) family. As to quaternary structure, homodimer.

The protein resides in the cell inner membrane. In terms of biological role, part of the ABC transporter complex HlyBD involved in hemolysin export. Transmembrane domains (TMD) form a pore in the inner membrane and the ATP-binding domain (NBD) is responsible for energy generation. The protein is Alpha-hemolysin translocation ATP-binding protein HlyB (hlyB) of Escherichia coli.